Here is a 129-residue protein sequence, read N- to C-terminus: Protein GLUTAMINE DUMPER 2 (129 aa).

Topologically, residues 1-34 (MQTMEGRQYNYQDSINASSSMVVPHSPWHSPVPY) are extracellular. The helical transmembrane segment at 35–55 (LFGGLAAMLALICVALLILAC) threads the bilayer. At 56-129 (SYWRLSGSAE…DHNEEEGRRG (74 aa)) the chain is on the cytoplasmic side. The segment at 66–89 (RDLEAGDDAKPDNDTNKTKHTEMP) is disordered. The VIMAG signature appears at 94 to 98 (VIMAG). The tract at residues 106–129 (ATPATRSEQSCTCGDHNEEEGRRG) is disordered. The segment covering 120–129 (DHNEEEGRRG) has biased composition (basic and acidic residues).

Belongs to the GLUTAMINE DUMPER 1 (TC 9.B.60) family. In terms of tissue distribution, expressed in the vascular tissues.

It localises to the membrane. In terms of biological role, probable subunit of an amino acid transporter involved in the regulation of the amino acid metabolism. Stimulates amino acid export by activating nonselective amino acid facilitators. The polypeptide is Protein GLUTAMINE DUMPER 2 (GDU2) (Arabidopsis thaliana (Mouse-ear cress)).